Reading from the N-terminus, the 66-residue chain is ERDGYIVQLHNCVYHCGLNPYCNGLCTKNGATSGSYCQWMTKWGNACYCYALPDKVPIKWLDPKCY.

Positions 2–66 constitute an LCN-type CS-alpha/beta domain; the sequence is RDGYIVQLHN…PIKWLDPKCY (65 aa). Cystine bridges form between cysteine 12-cysteine 65, cysteine 16-cysteine 37, cysteine 22-cysteine 47, and cysteine 26-cysteine 49.

It belongs to the long (4 C-C) scorpion toxin superfamily. Sodium channel inhibitor family. Alpha subfamily. As to expression, expressed by the venom gland.

The protein resides in the secreted. Its function is as follows. Alpha toxins bind voltage-independently at site-3 of sodium channels (Nav) and inhibit the inactivation of the activated channels, thereby blocking neuronal transmission. This toxin possesses a high paralytic activity against mice. This Orthochirus scrobiculosus (Central Asian scorpion) protein is Toxin Os1.